Reading from the N-terminus, the 255-residue chain is MNINKIALIYNKNSKHLAIIEEIKKLYNYCKIEEAEVIIIIGGDGELLHNIHRYMHLNIPFYGLNLGSLGFLMNPLDTKKLLQNIYESTVSILHPLLMQVEDTSGQIYKALAINEVSIFRKTNQVAKFRIDVNGVERMSELVADGALVATPAGSSAYNLSAGGPILPLASNMLCLTPICSFRPRRWHGALLLSTDTIKFEILNITKRPVNATADFQEFNNITRVTVKSTKDKYIKLLFNKNHTLEDRIIKEQFGE.

Residue Asp44 is the Proton acceptor of the active site. Residues 44–45 (DG), His49, 114–115 (NE), Asp144, Ala152, 155–160 (SAYNLS), and Gln216 contribute to the NAD(+) site.

It belongs to the NAD kinase family. A divalent metal cation serves as cofactor.

Its subcellular location is the cytoplasm. The enzyme catalyses NAD(+) + ATP = ADP + NADP(+) + H(+). Functionally, involved in the regulation of the intracellular balance of NAD and NADP, and is a key enzyme in the biosynthesis of NADP. Catalyzes specifically the phosphorylation on 2'-hydroxyl of the adenosine moiety of NAD to yield NADP. This chain is NAD kinase, found in Rickettsia prowazekii (strain Madrid E).